The following is a 547-amino-acid chain: Alpha-humulene/(-)-(E)-beta-caryophyllene synthase (547 aa).

Residues arginine 262, aspartate 299, aspartate 303, arginine 442, and aspartate 445 each contribute to the (2E,6E)-farnesyl diphosphate site. Aspartate 299 and aspartate 303 together coordinate Mg(2+). Residues 299–303 carry the DDXXD motif motif; the sequence is DDMYD. Mg(2+) is bound by residues aspartate 445, aspartate 446, serine 449, and glutamate 453.

It belongs to the terpene synthase family. Tpsa subfamily. Monomer. The cofactor is Mg(2+). Mn(2+) is required as a cofactor. In terms of tissue distribution, expressed exclusively in flowers. Expressed in the flower stigmata and also detected in the mesocarp cell layers of the silique wall.

It is found in the cytoplasm. It catalyses the reaction (2E,6E)-farnesyl diphosphate = (-)-(E)-beta-caryophyllene + diphosphate. The catalysed reaction is (2E,6E)-farnesyl diphosphate = alpha-copaene + diphosphate. It carries out the reaction (2E,6E)-farnesyl diphosphate = alpha-humulene + diphosphate. The enzyme catalyses (2E,6E)-farnesyl diphosphate = (1S,2S,4R)-beta-elemene + diphosphate. The protein operates within secondary metabolite biosynthesis; terpenoid biosynthesis. Functionally, involved in sesquiterpene (C15) biosynthesis. The major products are beta-caryophyllene and alpha-humulene. Does not convert geranyl diphosphate (GPP) to any monoterpenes. This chain is Alpha-humulene/(-)-(E)-beta-caryophyllene synthase, found in Arabidopsis thaliana (Mouse-ear cress).